Consider the following 273-residue polypeptide: Large ribosomal subunit protein uL2 (273 aa).

The disordered stretch occupies residues 221-262 (RGTAMNPVDHPHGGGEGRNFGKHPVTPWGVQTKGKKTRHNKR). The segment covering 253–262 (KGKKTRHNKR) has biased composition (basic residues).

It belongs to the universal ribosomal protein uL2 family. Part of the 50S ribosomal subunit. Forms a bridge to the 30S subunit in the 70S ribosome.

Functionally, one of the primary rRNA binding proteins. Required for association of the 30S and 50S subunits to form the 70S ribosome, for tRNA binding and peptide bond formation. It has been suggested to have peptidyltransferase activity; this is somewhat controversial. Makes several contacts with the 16S rRNA in the 70S ribosome. The sequence is that of Large ribosomal subunit protein uL2 from Aggregatibacter actinomycetemcomitans (Actinobacillus actinomycetemcomitans).